The sequence spans 378 residues: UPF0754 membrane protein BCE_0952 (378 aa).

2 helical membrane-spanning segments follow: residues 1 to 21 (MNIW…GGFT) and 357 to 377 (YLGA…LLFL).

This sequence belongs to the UPF0754 family.

The protein resides in the cell membrane. This Bacillus cereus (strain ATCC 10987 / NRS 248) protein is UPF0754 membrane protein BCE_0952.